Here is a 517-residue protein sequence, read N- to C-terminus: Maturase K (517 aa).

It belongs to the intron maturase 2 family. MatK subfamily.

Its subcellular location is the plastid. It is found in the chloroplast. In terms of biological role, usually encoded in the trnK tRNA gene intron. Probably assists in splicing its own and other chloroplast group II introns. This Veronica arvensis (Wall speedwell) protein is Maturase K.